Reading from the N-terminus, the 72-residue chain is Translation initiation factor IF-1 (72 aa).

Positions 1–72 (MAKDDVIEIE…TKGRITYRFK (72 aa)) constitute an S1-like domain.

This sequence belongs to the IF-1 family. Component of the 30S ribosomal translation pre-initiation complex which assembles on the 30S ribosome in the order IF-2 and IF-3, IF-1 and N-formylmethionyl-tRNA(fMet); mRNA recruitment can occur at any time during PIC assembly.

It localises to the cytoplasm. Its function is as follows. One of the essential components for the initiation of protein synthesis. Stabilizes the binding of IF-2 and IF-3 on the 30S subunit to which N-formylmethionyl-tRNA(fMet) subsequently binds. Helps modulate mRNA selection, yielding the 30S pre-initiation complex (PIC). Upon addition of the 50S ribosomal subunit IF-1, IF-2 and IF-3 are released leaving the mature 70S translation initiation complex. This chain is Translation initiation factor IF-1, found in Latilactobacillus sakei subsp. sakei (strain 23K) (Lactobacillus sakei subsp. sakei).